We begin with the raw amino-acid sequence, 448 residues long: Adenylosuccinate synthetase (448 aa).

Residues 22 to 28 (GDEGKGK) and 50 to 52 (GHT) contribute to the GTP site. Asp23 (proton acceptor) is an active-site residue. 2 residues coordinate Mg(2+): Asp23 and Gly50. Residues 23–26 (DEGK), 48–51 (NAGH), Thr139, Arg153, Gln234, Thr249, and Arg321 contribute to the IMP site. His51 (proton donor) is an active-site residue. 317–323 (SVTGRPR) is a substrate binding site. Residues Arg323, 349–351 (KLD), and 431–433 (STG) each bind GTP.

The protein belongs to the adenylosuccinate synthetase family. Homodimer. Requires Mg(2+) as cofactor.

The protein localises to the cytoplasm. The enzyme catalyses IMP + L-aspartate + GTP = N(6)-(1,2-dicarboxyethyl)-AMP + GDP + phosphate + 2 H(+). It participates in purine metabolism; AMP biosynthesis via de novo pathway; AMP from IMP: step 1/2. In terms of biological role, plays an important role in the de novo pathway of purine nucleotide biosynthesis. Catalyzes the first committed step in the biosynthesis of AMP from IMP. In Burkholderia mallei (strain NCTC 10247), this protein is Adenylosuccinate synthetase.